A 78-amino-acid polypeptide reads, in one-letter code: Large ribosomal subunit protein bL28 (78 aa).

A disordered region spans residues 1–25; it reads MSRVCQVTGKRPTVGNNRSHAKNAT.

This sequence belongs to the bacterial ribosomal protein bL28 family.

The sequence is that of Large ribosomal subunit protein bL28 from Tolumonas auensis (strain DSM 9187 / NBRC 110442 / TA 4).